A 429-amino-acid chain; its full sequence is Serine hydroxymethyltransferase (429 aa).

(6S)-5,6,7,8-tetrahydrofolate is bound at residue 120-122 (GHI). N6-(pyridoxal phosphate)lysine is present on lysine 226.

This sequence belongs to the SHMT family. In terms of assembly, homodimer. Pyridoxal 5'-phosphate is required as a cofactor.

It is found in the cytoplasm. The catalysed reaction is 5,10-methylenetetrahydromethanopterin + glycine + H2O = 5,6,7,8-tetrahydromethanopterin + L-serine. It carries out the reaction L-allo-threonine = acetaldehyde + glycine. It functions in the pathway amino-acid biosynthesis; glycine biosynthesis; glycine from L-serine: step 1/1. Catalyzes the reversible interconversion of serine and glycine with tetrahydromethanopterin (H4MPT) serving as the one-carbon carrier. The use of tetrahydrofolate (THF or H4PteGlu) as the pteridine substrate is 450-fold less efficient than that of H4MPT. Also exhibits a pteridine-independent aldolase activity toward beta-hydroxyamino acids, producing glycine and aldehydes, via a retro-aldol mechanism. Thus, is able to catalyze the cleavage of L-allo-threonine and L-threo-beta-phenylserine. The protein is Serine hydroxymethyltransferase of Methanocaldococcus jannaschii (strain ATCC 43067 / DSM 2661 / JAL-1 / JCM 10045 / NBRC 100440) (Methanococcus jannaschii).